Here is a 57-residue protein sequence, read N- to C-terminus: UPF0434 protein Spea_1772 (57 aa).

It belongs to the UPF0434 family.

This chain is UPF0434 protein Spea_1772, found in Shewanella pealeana (strain ATCC 700345 / ANG-SQ1).